Here is a 189-residue protein sequence, read N- to C-terminus: Probable nicotinate-nucleotide adenylyltransferase (189 aa).

The protein belongs to the NadD family.

It carries out the reaction nicotinate beta-D-ribonucleotide + ATP + H(+) = deamido-NAD(+) + diphosphate. It functions in the pathway cofactor biosynthesis; NAD(+) biosynthesis; deamido-NAD(+) from nicotinate D-ribonucleotide: step 1/1. Functionally, catalyzes the reversible adenylation of nicotinate mononucleotide (NaMN) to nicotinic acid adenine dinucleotide (NaAD). This chain is Probable nicotinate-nucleotide adenylyltransferase, found in Bacillus cereus (strain B4264).